We begin with the raw amino-acid sequence, 481 residues long: Glutamyl-tRNA(Gln) amidotransferase subunit A (481 aa).

Catalysis depends on charge relay system residues K76 and S151. The Acyl-ester intermediate role is filled by S175.

This sequence belongs to the amidase family. GatA subfamily. In terms of assembly, heterotrimer of A, B and C subunits.

It carries out the reaction L-glutamyl-tRNA(Gln) + L-glutamine + ATP + H2O = L-glutaminyl-tRNA(Gln) + L-glutamate + ADP + phosphate + H(+). In terms of biological role, allows the formation of correctly charged Gln-tRNA(Gln) through the transamidation of misacylated Glu-tRNA(Gln) in organisms which lack glutaminyl-tRNA synthetase. The reaction takes place in the presence of glutamine and ATP through an activated gamma-phospho-Glu-tRNA(Gln). The polypeptide is Glutamyl-tRNA(Gln) amidotransferase subunit A (Chlorobaculum tepidum (strain ATCC 49652 / DSM 12025 / NBRC 103806 / TLS) (Chlorobium tepidum)).